We begin with the raw amino-acid sequence, 405 residues long: Threonine synthase (405 aa).

Position 104 is an N6-(pyridoxal phosphate)lysine (Lys104). Pyridoxal 5'-phosphate contacts are provided by residues Asn130, 231–235, and Thr369; that span reads GNAGN.

Belongs to the threonine synthase family. Homotrimer. Pyridoxal 5'-phosphate is required as a cofactor.

It catalyses the reaction O-phospho-L-homoserine + H2O = L-threonine + phosphate. Its pathway is amino-acid biosynthesis; L-threonine biosynthesis; L-threonine from L-aspartate: step 5/5. Catalyzes the gamma-elimination of phosphate from L-phosphohomoserine and the beta-addition of water to produce L-threonine. Does not catalyze the conversion of O-acetyl-L-homoserine into threonine. The sequence is that of Threonine synthase (thrC) from Methanosarcina acetivorans (strain ATCC 35395 / DSM 2834 / JCM 12185 / C2A).